A 334-amino-acid chain; its full sequence is Ketol-acid reductoisomerase (NADP(+)) (334 aa).

The KARI N-terminal Rossmann domain occupies 2-181 (TKVYYDETVT…GATRAGVIET (180 aa)). Residues 25–28 (YGSQ), Arg-48, Ser-52, and 82–85 (DEIQ) each bind NADP(+). Residue His-107 is part of the active site. An NADP(+)-binding site is contributed by Gly-133. A KARI C-terminal knotted domain is found at 182-327 (TFKEETETDL…RELREMMPFI (146 aa)). Residues Asp-190, Glu-194, Glu-226, and Glu-230 each coordinate Mg(2+). Ser-251 provides a ligand contact to substrate.

This sequence belongs to the ketol-acid reductoisomerase family. The cofactor is Mg(2+).

It catalyses the reaction (2R)-2,3-dihydroxy-3-methylbutanoate + NADP(+) = (2S)-2-acetolactate + NADPH + H(+). The enzyme catalyses (2R,3R)-2,3-dihydroxy-3-methylpentanoate + NADP(+) = (S)-2-ethyl-2-hydroxy-3-oxobutanoate + NADPH + H(+). The protein operates within amino-acid biosynthesis; L-isoleucine biosynthesis; L-isoleucine from 2-oxobutanoate: step 2/4. It functions in the pathway amino-acid biosynthesis; L-valine biosynthesis; L-valine from pyruvate: step 2/4. Its function is as follows. Involved in the biosynthesis of branched-chain amino acids (BCAA). Catalyzes an alkyl-migration followed by a ketol-acid reduction of (S)-2-acetolactate (S2AL) to yield (R)-2,3-dihydroxy-isovalerate. In the isomerase reaction, S2AL is rearranged via a Mg-dependent methyl migration to produce 3-hydroxy-3-methyl-2-ketobutyrate (HMKB). In the reductase reaction, this 2-ketoacid undergoes a metal-dependent reduction by NADPH to yield (R)-2,3-dihydroxy-isovalerate. The chain is Ketol-acid reductoisomerase (NADP(+)) from Staphylococcus epidermidis (strain ATCC 35984 / DSM 28319 / BCRC 17069 / CCUG 31568 / BM 3577 / RP62A).